Here is a 344-residue protein sequence, read N- to C-terminus: Lipase chaperone (344 aa).

Residues 14 to 34 (AAIYGGVGLAAVAGVAMWSGA) traverse the membrane as a helical segment.

It belongs to the lipase chaperone family.

The protein resides in the cell inner membrane. Its function is as follows. May be involved in the folding of the extracellular lipase during its passage through the periplasm. The polypeptide is Lipase chaperone (Burkholderia cenocepacia (strain ATCC BAA-245 / DSM 16553 / LMG 16656 / NCTC 13227 / J2315 / CF5610) (Burkholderia cepacia (strain J2315))).